A 709-amino-acid polypeptide reads, in one-letter code: Acyl-coenzyme A oxidase 4 (709 aa).

Positions 1–12 (MTFTKKNVSVSQ) are enriched in polar residues. Residues 1-29 (MTFTKKNVSVSQGPDPRSSIQKERDSSKW) are disordered.

The protein belongs to the acyl-CoA oxidase family. As to quaternary structure, homooctamer. Requires FAD as cofactor.

Its subcellular location is the peroxisome. The catalysed reaction is a 2,3-saturated acyl-CoA + O2 = a (2E)-enoyl-CoA + H2O2. It participates in lipid metabolism; peroxisomal fatty acid beta-oxidation. The chain is Acyl-coenzyme A oxidase 4 (POX4) from Candida tropicalis (Yeast).